The primary structure comprises 488 residues: Glutamyl-tRNA(Gln) amidotransferase subunit A, mitochondrial (488 aa).

Active-site charge relay system residues include K62 and S140. Residue S164 is the Acyl-ester intermediate of the active site. Positions 205 to 228 (GHDDNDPTSITPQTRERIQDRLSR) are disordered. The span at 218-227 (TRERIQDRLS) shows a compositional bias: basic and acidic residues.

It belongs to the amidase family. GatA subfamily. Subunit of the heterotrimeric GatCAB amidotransferase (AdT) complex, composed of A, B and C subunits.

It localises to the mitochondrion. It catalyses the reaction L-glutamyl-tRNA(Gln) + L-glutamine + ATP + H2O = L-glutaminyl-tRNA(Gln) + L-glutamate + ADP + phosphate + H(+). Its function is as follows. Allows the formation of correctly charged Gln-tRNA(Gln) through the transamidation of misacylated Glu-tRNA(Gln) in the mitochondria. The reaction takes place in the presence of glutamine and ATP through an activated gamma-phospho-Glu-tRNA(Gln). The polypeptide is Glutamyl-tRNA(Gln) amidotransferase subunit A, mitochondrial (Tuber melanosporum (strain Mel28) (Perigord black truffle)).